Reading from the N-terminus, the 151-residue chain is Phosphoribosyl-AMP cyclohydrolase (151 aa).

Residue D94 participates in Mg(2+) binding. C95 contacts Zn(2+). 2 residues coordinate Mg(2+): D96 and D98. C112 and C119 together coordinate Zn(2+).

The protein belongs to the PRA-CH family. Homodimer. Mg(2+) is required as a cofactor. Requires Zn(2+) as cofactor.

It localises to the cytoplasm. It carries out the reaction 1-(5-phospho-beta-D-ribosyl)-5'-AMP + H2O = 1-(5-phospho-beta-D-ribosyl)-5-[(5-phospho-beta-D-ribosylamino)methylideneamino]imidazole-4-carboxamide. It functions in the pathway amino-acid biosynthesis; L-histidine biosynthesis; L-histidine from 5-phospho-alpha-D-ribose 1-diphosphate: step 3/9. In terms of biological role, catalyzes the hydrolysis of the adenine ring of phosphoribosyl-AMP. This chain is Phosphoribosyl-AMP cyclohydrolase, found in Rhodopseudomonas palustris (strain ATCC BAA-98 / CGA009).